We begin with the raw amino-acid sequence, 406 residues long: MKQAGFPLGILLLFWVSYVTDFSLVLLIKGGALSGTDTYQSLVNKTFGFPGYLLLSVLQFLYPFIAMISYNIIAGDTLSKVFQRIPGVDPENVFIGRHFIIGLSTVTFTLPLSLYRNIAKLGKVSLISTGLTTLILGIVMARAISLGPHIPKTEDAWVFAKPNAIQAVGVMSFAFICHHNSFLVYSSLEEPTVAKWSRLIHMSIVISVFICIFFATCGYLTFTGFTQGDLFENYCRNDDLVTFGRFCYGVTVILTYPMECFVTREVIANVFFGGNLSSVFHIVVTVMVITVATLVSLLIDCLGIVLELNGVLCATPLIFIIPSACYLKLSEEPRTHSDKIMSCVMLPIGAVVMVFGFVMAITNTQDCTHGQEMFYCFPDNFSLTNTSESHVQQTTQLSTLNISIFQ.

At 1 to 7 (MKQAGFP) the chain is on the cytoplasmic side. A helical membrane pass occupies residues 8 to 28 (LGILLLFWVSYVTDFSLVLLI). N44 is a glycosylation site (N-linked (GlcNAc...) asparagine). Helical transmembrane passes span 48-68 (GFPG…IAMI), 93-113 (VFIG…LPLS), 121-141 (LGKV…IVMA), 156-176 (AWVF…FAFI), 202-222 (MSIV…YLTF), and 241-263 (VTFG…CFVT). N275 carries N-linked (GlcNAc...) asparagine glycosylation. 3 consecutive transmembrane segments (helical) span residues 279 to 299 (VFHI…SLLI), 301 to 321 (CLGI…IFII), and 340 to 360 (IMSC…FVMA).

It belongs to the amino acid/polyamine transporter 2 family.

It localises to the membrane. In terms of biological role, putative sodium-dependent amino acid/proton antiporter. This Homo sapiens (Human) protein is Putative sodium-coupled neutral amino acid transporter 11 (SLC38A11).